The primary structure comprises 742 residues: Phosphoribosylformylglycinamidine synthase subunit PurL (742 aa).

The active site involves His54. Residues Tyr57 and Lys96 each coordinate ATP. Glu98 is a binding site for Mg(2+). Substrate contacts are provided by residues 99–102 and Arg121; that span reads SHNH. His100 serves as the catalytic Proton acceptor. Asp122 is a Mg(2+) binding site. Substrate is bound at residue Gln245. Asp273 serves as a coordination point for Mg(2+). Substrate is bound at residue 317–319; it reads ESQ. ATP is bound by residues Asp500 and Gly537. Asn538 is a binding site for Mg(2+). Ser540 contributes to the substrate binding site.

Belongs to the FGAMS family. In terms of assembly, monomer. Part of the FGAM synthase complex composed of 1 PurL, 1 PurQ and 2 PurS subunits.

The protein localises to the cytoplasm. It carries out the reaction N(2)-formyl-N(1)-(5-phospho-beta-D-ribosyl)glycinamide + L-glutamine + ATP + H2O = 2-formamido-N(1)-(5-O-phospho-beta-D-ribosyl)acetamidine + L-glutamate + ADP + phosphate + H(+). Its pathway is purine metabolism; IMP biosynthesis via de novo pathway; 5-amino-1-(5-phospho-D-ribosyl)imidazole from N(2)-formyl-N(1)-(5-phospho-D-ribosyl)glycinamide: step 1/2. Its function is as follows. Part of the phosphoribosylformylglycinamidine synthase complex involved in the purines biosynthetic pathway. Catalyzes the ATP-dependent conversion of formylglycinamide ribonucleotide (FGAR) and glutamine to yield formylglycinamidine ribonucleotide (FGAM) and glutamate. The FGAM synthase complex is composed of three subunits. PurQ produces an ammonia molecule by converting glutamine to glutamate. PurL transfers the ammonia molecule to FGAR to form FGAM in an ATP-dependent manner. PurS interacts with PurQ and PurL and is thought to assist in the transfer of the ammonia molecule from PurQ to PurL. The polypeptide is Phosphoribosylformylglycinamidine synthase subunit PurL (Bacillus velezensis (strain DSM 23117 / BGSC 10A6 / LMG 26770 / FZB42) (Bacillus amyloliquefaciens subsp. plantarum)).